The chain runs to 178 residues: Ribosome maturation factor RimM (178 aa).

One can recognise a PRC barrel domain in the interval 95–174 (EGQHFWFNVI…IVHVKDAKDI (80 aa)).

The protein belongs to the RimM family. As to quaternary structure, binds ribosomal protein uS19.

It localises to the cytoplasm. In terms of biological role, an accessory protein needed during the final step in the assembly of 30S ribosomal subunit, possibly for assembly of the head region. Essential for efficient processing of 16S rRNA. May be needed both before and after RbfA during the maturation of 16S rRNA. It has affinity for free ribosomal 30S subunits but not for 70S ribosomes. In Sulfurovum sp. (strain NBC37-1), this protein is Ribosome maturation factor RimM.